Here is a 182-residue protein sequence, read N- to C-terminus: UPF0149 protein PM1723 (182 aa).

This sequence belongs to the UPF0149 family.

In Pasteurella multocida (strain Pm70), this protein is UPF0149 protein PM1723.